A 508-amino-acid chain; its full sequence is Lysine--tRNA ligase (508 aa).

Mg(2+)-binding residues include glutamate 418 and glutamate 425.

This sequence belongs to the class-II aminoacyl-tRNA synthetase family. As to quaternary structure, homodimer. Mg(2+) is required as a cofactor.

It is found in the cytoplasm. The enzyme catalyses tRNA(Lys) + L-lysine + ATP = L-lysyl-tRNA(Lys) + AMP + diphosphate. This Burkholderia mallei (strain NCTC 10247) protein is Lysine--tRNA ligase.